Consider the following 415-residue polypeptide: UDP-N-acetylglucosamine 1-carboxyvinyltransferase (415 aa).

Position 22–23 (22–23) interacts with phosphoenolpyruvate; that stretch reads KN. Arg92 provides a ligand contact to UDP-N-acetyl-alpha-D-glucosamine. Cys116 serves as the catalytic Proton donor. Position 116 is a 2-(S-cysteinyl)pyruvic acid O-phosphothioketal (Cys116). Residues 121–125, Asp304, and Val326 each bind UDP-N-acetyl-alpha-D-glucosamine; that span reads RPIDL.

It belongs to the EPSP synthase family. MurA subfamily.

The protein localises to the cytoplasm. The enzyme catalyses phosphoenolpyruvate + UDP-N-acetyl-alpha-D-glucosamine = UDP-N-acetyl-3-O-(1-carboxyvinyl)-alpha-D-glucosamine + phosphate. It participates in cell wall biogenesis; peptidoglycan biosynthesis. Its function is as follows. Cell wall formation. Adds enolpyruvyl to UDP-N-acetylglucosamine. This Halothermothrix orenii (strain H 168 / OCM 544 / DSM 9562) protein is UDP-N-acetylglucosamine 1-carboxyvinyltransferase.